Here is a 439-residue protein sequence, read N- to C-terminus: Tol-Pal system protein TolB (439 aa).

Positions 1-22 are cleaved as a signal peptide; that stretch reads MKKPLRWLAALTALLLPLSAFA.

This sequence belongs to the TolB family. The Tol-Pal system is composed of five core proteins: the inner membrane proteins TolA, TolQ and TolR, the periplasmic protein TolB and the outer membrane protein Pal. They form a network linking the inner and outer membranes and the peptidoglycan layer.

The protein resides in the periplasm. Its function is as follows. Part of the Tol-Pal system, which plays a role in outer membrane invagination during cell division and is important for maintaining outer membrane integrity. The protein is Tol-Pal system protein TolB of Xanthomonas campestris pv. campestris (strain 8004).